Reading from the N-terminus, the 120-residue chain is Fumarate reductase subunit D (120 aa).

Helical transmembrane passes span F25 to I45, V55 to P75, and I100 to I120.

It belongs to the FrdD family. In terms of assembly, part of an enzyme complex containing four subunits: a flavoprotein (FrdA), an iron-sulfur protein (FrdB), and two hydrophobic anchor proteins (FrdC and FrdD).

The protein resides in the cell inner membrane. Its function is as follows. Anchors the catalytic components of the fumarate reductase complex to the cell membrane, binds quinones. The sequence is that of Fumarate reductase subunit D from Aliivibrio fischeri (strain MJ11) (Vibrio fischeri).